Reading from the N-terminus, the 207-residue chain is Holliday junction branch migration complex subunit RuvA (207 aa).

The interval 1–64 is domain I; the sequence is MISYIKGELA…EDECSLFGFL (64 aa). Residues 65-143 form a domain II region; that stretch reads TRDDLSMFKM…LDEVFESALS (79 aa). A flexible linker region spans residues 144-155; sequence KNKKADNNSNVS. A domain III region spans residues 156–207; sequence NVMMIRNDAVEALVSLGYSSKDALVAVKEVEDIENKDSETVLKEALKKLVKF.

It belongs to the RuvA family. As to quaternary structure, homotetramer. Forms an RuvA(8)-RuvB(12)-Holliday junction (HJ) complex. HJ DNA is sandwiched between 2 RuvA tetramers; dsDNA enters through RuvA and exits via RuvB. An RuvB hexamer assembles on each DNA strand where it exits the tetramer. Each RuvB hexamer is contacted by two RuvA subunits (via domain III) on 2 adjacent RuvB subunits; this complex drives branch migration. In the full resolvosome a probable DNA-RuvA(4)-RuvB(12)-RuvC(2) complex forms which resolves the HJ.

It localises to the cytoplasm. The RuvA-RuvB-RuvC complex processes Holliday junction (HJ) DNA during genetic recombination and DNA repair, while the RuvA-RuvB complex plays an important role in the rescue of blocked DNA replication forks via replication fork reversal (RFR). RuvA specifically binds to HJ cruciform DNA, conferring on it an open structure. The RuvB hexamer acts as an ATP-dependent pump, pulling dsDNA into and through the RuvAB complex. HJ branch migration allows RuvC to scan DNA until it finds its consensus sequence, where it cleaves and resolves the cruciform DNA. This chain is Holliday junction branch migration complex subunit RuvA, found in Lachnospira eligens (strain ATCC 27750 / DSM 3376 / VPI C15-48 / C15-B4) (Eubacterium eligens).